The chain runs to 644 residues: 3D-(3,5/4)-trihydroxycyclohexane-1,2-dione hydrolase (644 aa).

Glu65 contacts thiamine diphosphate. Positions 442–522 (SLPGDLQRMW…INVLLFDNSG (81 aa)) are thiamine pyrophosphate binding. Residues Asp493 and Asn520 each coordinate Mg(2+).

It belongs to the TPP enzyme family. Requires Mg(2+) as cofactor. Thiamine diphosphate is required as a cofactor.

It catalyses the reaction 3D-3,5/4-trihydroxycyclohexane-1,2-dione + H2O = 5-deoxy-D-glucuronate + H(+). Its pathway is polyol metabolism; myo-inositol degradation into acetyl-CoA; acetyl-CoA from myo-inositol: step 3/7. Its function is as follows. Involved in the cleavage of the C1-C2 bond of 3D-(3,5/4)-trihydroxycyclohexane-1,2-dione (THcHDO) to yield 5-deoxy-glucuronate (5DG). The sequence is that of 3D-(3,5/4)-trihydroxycyclohexane-1,2-dione hydrolase from Bacillus cereus (strain AH820).